The sequence spans 247 residues: 5'-nucleotidase SurE (247 aa).

A divalent metal cation is bound by residues Asp8, Asp9, Ser39, and Asn91.

Belongs to the SurE nucleotidase family. The cofactor is a divalent metal cation.

Its subcellular location is the cytoplasm. It catalyses the reaction a ribonucleoside 5'-phosphate + H2O = a ribonucleoside + phosphate. Its function is as follows. Nucleotidase that shows phosphatase activity on nucleoside 5'-monophosphates. This Laribacter hongkongensis (strain HLHK9) protein is 5'-nucleotidase SurE.